A 291-amino-acid chain; its full sequence is UDP-N-acetylenolpyruvoylglucosamine reductase (291 aa).

One can recognise an FAD-binding PCMH-type domain in the interval Gly19 to Gly186. Arg165 is a catalytic residue. Ser215 functions as the Proton donor in the catalytic mechanism. The active site involves Glu285.

Belongs to the MurB family. It depends on FAD as a cofactor.

It localises to the cytoplasm. It carries out the reaction UDP-N-acetyl-alpha-D-muramate + NADP(+) = UDP-N-acetyl-3-O-(1-carboxyvinyl)-alpha-D-glucosamine + NADPH + H(+). It participates in cell wall biogenesis; peptidoglycan biosynthesis. Cell wall formation. The protein is UDP-N-acetylenolpyruvoylglucosamine reductase of Prochlorococcus marinus (strain NATL2A).